A 105-amino-acid polypeptide reads, in one-letter code: UPF0145 protein Mevan_1624 (105 aa).

The protein belongs to the UPF0145 family.

The protein is UPF0145 protein Mevan_1624 of Methanococcus vannielii (strain ATCC 35089 / DSM 1224 / JCM 13029 / OCM 148 / SB).